We begin with the raw amino-acid sequence, 362 residues long: Peptide chain release factor 1 (362 aa).

The residue at position 237 (glutamine 237) is an N5-methylglutamine.

This sequence belongs to the prokaryotic/mitochondrial release factor family. Post-translationally, methylated by PrmC. Methylation increases the termination efficiency of RF1.

It localises to the cytoplasm. Functionally, peptide chain release factor 1 directs the termination of translation in response to the peptide chain termination codons UAG and UAA. The sequence is that of Peptide chain release factor 1 from Aeromonas salmonicida (strain A449).